The primary structure comprises 182 residues: Lipoprotein signal peptidase (182 aa).

Helical transmembrane passes span 15–35, 44–64, 65–85, and 97–117; these read LYIGVIFLGIILDLVTKFLVI, LEVLGSFFRMTLTFNTGFVFG, AFQDNAIPSLIATGIAIVFLI, and PWGWNLVMAGAFGNFLDKFFV. Catalysis depends on residues Asp140 and Asp162. The chain crosses the membrane as a helical span at residues 155-175; the sequence is WPAFNVADSCVTIGLTILIFT.

This sequence belongs to the peptidase A8 family.

The protein localises to the cell inner membrane. The catalysed reaction is Release of signal peptides from bacterial membrane prolipoproteins. Hydrolyzes -Xaa-Yaa-Zaa-|-(S,diacylglyceryl)Cys-, in which Xaa is hydrophobic (preferably Leu), and Yaa (Ala or Ser) and Zaa (Gly or Ala) have small, neutral side chains.. The protein operates within protein modification; lipoprotein biosynthesis (signal peptide cleavage). In terms of biological role, this protein specifically catalyzes the removal of signal peptides from prolipoproteins. The polypeptide is Lipoprotein signal peptidase (Leptospira borgpetersenii serovar Hardjo-bovis (strain L550)).